Reading from the N-terminus, the 231-residue chain is Thermonuclease (231 aa).

Positions 1–26 are cleaved as a signal peptide; that stretch reads MLVMTEYLLSAGICMAIVSILLIGMA. Propeptides lie at residues 27-63 and 64-82; these read ISNV…SANA and SQTD…TVYS. Residues 61 to 73 are compositionally biased toward polar residues; that stretch reads ANASQTDNGVNRS. The segment at 61-86 is disordered; sequence ANASQTDNGVNRSGSEDPTVYSATST. A Ca(2+)-binding site is contributed by D103. R117 is a catalytic residue. Residues D122 and T123 each contribute to the Ca(2+) site. Catalysis depends on residues E125 and R169. A compositionally biased stretch (basic and acidic residues) spans 203 to 219; sequence HEQHLRKSEAQAKKEKL. The disordered stretch occupies residues 203–231; the sequence is HEQHLRKSEAQAKKEKLNIWSEDNADSGQ.

This sequence belongs to the thermonuclease family. It depends on Ca(2+) as a cofactor.

It localises to the secreted. It is found in the membrane. The enzyme catalyses Endonucleolytic cleavage to nucleoside 3'-phosphates and 3'-phosphooligonucleotide end-products.. Functionally, enzyme that catalyzes the hydrolysis of both DNA and RNA at the 5' position of the phosphodiester bond. The chain is Thermonuclease from Staphylococcus aureus.